Reading from the N-terminus, the 509-residue chain is Dihydrolipoyl dehydrogenase, mitochondrial (509 aa).

The transit peptide at 1–35 (MQSWSRVYRSLAKKGHFNRISHGLQGVSSVPLRTY) directs the protein to the mitochondrion. An N6-acetyllysine; alternate modification is found at Lys-66. Position 66 is an N6-succinyllysine; alternate (Lys-66). FAD contacts are provided by residues 71–80 (EKNETLGGTC) and Lys-89. A disulfide bridge links Cys-80 with Cys-85. Residues Lys-104, Lys-122, Lys-132, and Lys-143 each carry the N6-acetyllysine; alternate modification. N6-succinyllysine; alternate is present on residues Lys-104, Lys-122, Lys-132, and Lys-143. Residue Gly-154 participates in FAD binding. 2 positions are modified to N6-succinyllysine: Lys-159 and Lys-166. FAD is bound at residue 183-185 (TGS). NAD(+)-binding positions include 220–227 (GAGVIGVE) and Glu-243. N6-succinyllysine occurs at positions 273 and 277. An NAD(+)-binding site is contributed by Val-278. Phosphoserine occurs at positions 285 and 297. Residue Gly-314 participates in NAD(+) binding. Lys-334 is modified (N6-acetyllysine; alternate). The residue at position 334 (Lys-334) is an N6-succinyllysine; alternate. The residue at position 346 (Lys-346) is an N6-acetyllysine. FAD-binding positions include Asp-355 and 361 to 364 (MLAH). At Lys-410 the chain carries N6-acetyllysine; alternate. At Lys-410 the chain carries N6-succinyllysine; alternate. 2 positions are modified to N6-acetyllysine: Lys-417 and Lys-420. An N6-succinyllysine modification is found at Lys-430. Residue His-487 is the Proton acceptor of the active site. Lys-505 is subject to N6-acetyllysine; alternate. Lys-505 carries the N6-succinyllysine; alternate modification.

The protein belongs to the class-I pyridine nucleotide-disulfide oxidoreductase family. In terms of assembly, homodimer. Part of the multimeric pyruvate dehydrogenase complex that contains multiple copies of pyruvate dehydrogenase (subunits PDHA (PDHA1 or PDHA2) and PDHB, E1), dihydrolipoamide acetyltransferase (DLAT, E2) and lipoamide dehydrogenase (DLD, E3). These subunits are bound to an inner core composed of about 48 DLAT and 12 PDHX molecules (by non covalent bonds). The 2-oxoglutarate dehydrogenase complex is composed of OGDH (2-oxoglutarate dehydrogenase; E1), DLST (dihydrolipoamide succinyltransferase; E2), DLD (dihydrolipoamide dehydrogenase; E3) and the assembly factor KGD4. It contains multiple copies of the three enzymatic components (E1, E2 and E3). In the nucleus, the 2-oxoglutarate dehydrogenase complex associates with KAT2A. Interacts with PDHX. FAD is required as a cofactor. Tyrosine phosphorylated. Expressed in liver (at protein level).

It localises to the mitochondrion matrix. The protein localises to the nucleus. It is found in the cell projection. Its subcellular location is the cilium. The protein resides in the flagellum. It localises to the cytoplasmic vesicle. The protein localises to the secretory vesicle. It is found in the acrosome. It catalyses the reaction N(6)-[(R)-dihydrolipoyl]-L-lysyl-[protein] + NAD(+) = N(6)-[(R)-lipoyl]-L-lysyl-[protein] + NADH + H(+). Its function is as follows. Lipoamide dehydrogenase is a component of the glycine cleavage system as well as an E3 component of three alpha-ketoacid dehydrogenase complexes (pyruvate-, alpha-ketoglutarate-, and branched-chain amino acid-dehydrogenase complex). The 2-oxoglutarate dehydrogenase complex is mainly active in the mitochondrion. A fraction of the 2-oxoglutarate dehydrogenase complex also localizes in the nucleus and is required for lysine succinylation of histones: associates with KAT2A on chromatin and provides succinyl-CoA to histone succinyltransferase KAT2A. In monomeric form may have additional moonlighting function as serine protease. Involved in the hyperactivation of spermatazoa during capacitation and in the spermatazoal acrosome reaction. The chain is Dihydrolipoyl dehydrogenase, mitochondrial (Dld) from Mus musculus (Mouse).